Here is a 465-residue protein sequence, read N- to C-terminus: Gamma-aminobutyric acid receptor subunit alpha-6 (465 aa).

Residues 1–19 (MALLIAWVCVAVSIEKALG) form the signal peptide. At 20–243 (GQGDGGDLYS…FHLQRKMGYF (224 aa)) the chain is on the extracellular side. N-linked (GlcNAc...) asparagine glycosylation is present at N31. R84 is a binding site for 4-aminobutanoate. Residues N128 and N141 are each glycosylated (N-linked (GlcNAc...) asparagine). T147 contacts 4-aminobutanoate. C156 and C170 form a disulfide bridge. Residues 244–264 (MIQIYTPCIMTVILSQVSFWI) traverse the membrane as a helical segment. At 265 to 270 (NKESVP) the chain is on the cytoplasmic side. The chain crosses the membrane as a helical span at residues 271–290 (ARTVFGITTVLTMTTLSISA). The Extracellular segment spans residues 291-304 (RHSLPKVSYATAMD). Residues 305-325 (WFIAVCFAFVFSALIEFAAVN) form a helical membrane-spanning segment. Over 326-424 (YFTNLQTQRA…GTSKIDQYSR (99 aa)) the chain is Cytoplasmic. The disordered stretch occupies residues 392 to 415 (NSASQCQPVSAPPPAPPAPPPVGG). A compositionally biased stretch (pro residues) spans 401–413 (SAPPPAPPAPPPV). A helical transmembrane segment spans residues 425 to 445 (ILFPVAFAGFNLVYWVVYLSK). Residues 446 to 465 (DTMEFFEPTAMHLRNDHQSN) lie on the Extracellular side of the membrane.

It belongs to the ligand-gated ion channel (TC 1.A.9) family. Gamma-aminobutyric acid receptor (TC 1.A.9.5) subfamily. GABRA6 sub-subfamily. Heteropentamer, formed by a combination of alpha (GABRA1-6), beta (GABRB1-3), gamma (GABRG1-3), delta (GABRD), epsilon (GABRE), rho (GABRR1-3), pi (GABRP) and theta (GABRQ) chains, each subunit exhibiting distinct physiological and pharmacological properties. Expressed in brain, in cerebellar granule cells.

It is found in the postsynaptic cell membrane. The protein resides in the cell membrane. It carries out the reaction chloride(in) = chloride(out). In terms of biological role, alpha subunit of the heteropentameric ligand-gated chloride channel gated by gamma-aminobutyric acid (GABA), a major inhibitory neurotransmitter in the brain. GABA-gated chloride channels, also named GABA(A) receptors (GABAAR), consist of five subunits arranged around a central pore and contain GABA active binding site(s) located at the alpha and beta subunit interface(s). When activated by GABA, GABAARs selectively allow the flow of chloride anions across the cell membrane down their electrochemical gradient. The protein is Gamma-aminobutyric acid receptor subunit alpha-6 (GABRA6) of Gallus gallus (Chicken).